Consider the following 43-residue polypeptide: Iota-conotoxin-like S11.2 (43 aa).

Cystine bridges form between Cys2–Cys16, Cys9–Cys19, Cys15–Cys24, and Cys18–Cys35. The residue at position 41 (Met41) is a D-methionine. Arg43 is a propeptide (removed by a carboxypeptidase).

This sequence belongs to the conotoxin I1 superfamily. In terms of tissue distribution, expressed by the venom duct.

It localises to the secreted. In terms of biological role, iota-conotoxins bind to voltage-gated sodium channels (Nav) and act as agonists by shifting the voltage-dependence of activation to more hyperpolarized levels. Produces general excitatory symptoms. The protein is Iota-conotoxin-like S11.2 of Conus striatus (Striated cone).